Here is a 309-residue protein sequence, read N- to C-terminus: Glutaminase (309 aa).

Residues Ser64, Asn114, Glu160, Asn167, Tyr191, Tyr243, and Val261 each coordinate substrate.

Belongs to the glutaminase family. As to quaternary structure, homotetramer.

The catalysed reaction is L-glutamine + H2O = L-glutamate + NH4(+). This chain is Glutaminase, found in Methylorubrum populi (strain ATCC BAA-705 / NCIMB 13946 / BJ001) (Methylobacterium populi).